Consider the following 206-residue polypeptide: Small ribosomal subunit protein uS4 (206 aa).

In terms of domain architecture, S4 RNA-binding spans 96 to 156 (GRLDNVVYRM…EKSKKQARIK (61 aa)).

This sequence belongs to the universal ribosomal protein uS4 family. In terms of assembly, part of the 30S ribosomal subunit. Contacts protein S5. The interaction surface between S4 and S5 is involved in control of translational fidelity.

Functionally, one of the primary rRNA binding proteins, it binds directly to 16S rRNA where it nucleates assembly of the body of the 30S subunit. In terms of biological role, with S5 and S12 plays an important role in translational accuracy. This Haemophilus influenzae (strain 86-028NP) protein is Small ribosomal subunit protein uS4.